We begin with the raw amino-acid sequence, 442 residues long: ORC1-type DNA replication protein 8 (442 aa).

ATP-binding positions include V66–A70 and Y218.

The protein belongs to the CDC6/cdc18 family.

Involved in regulation of DNA replication. The chain is ORC1-type DNA replication protein 8 (cdc6h) from Haloarcula marismortui (strain ATCC 43049 / DSM 3752 / JCM 8966 / VKM B-1809) (Halobacterium marismortui).